A 371-amino-acid chain; its full sequence is Tetraacyldisaccharide 4'-kinase (371 aa).

48 to 55 (SAGGTGKT) lines the ATP pocket.

Belongs to the LpxK family.

It carries out the reaction a lipid A disaccharide + ATP = a lipid IVA + ADP + H(+). Its pathway is glycolipid biosynthesis; lipid IV(A) biosynthesis; lipid IV(A) from (3R)-3-hydroxytetradecanoyl-[acyl-carrier-protein] and UDP-N-acetyl-alpha-D-glucosamine: step 6/6. Functionally, transfers the gamma-phosphate of ATP to the 4'-position of a tetraacyldisaccharide 1-phosphate intermediate (termed DS-1-P) to form tetraacyldisaccharide 1,4'-bis-phosphate (lipid IVA). The sequence is that of Tetraacyldisaccharide 4'-kinase from Chlorobium chlorochromatii (strain CaD3).